Here is a 439-residue protein sequence, read N- to C-terminus: sn-glycerol-3-phosphate-binding periplasmic protein UgpB (439 aa).

The signal sequence occupies residues 1-25 (MFNNAIRKTSICVALTLAFSANAMA). Sn-glycerol 3-phosphate contacts are provided by tyrosine 67, glutamate 91, serine 146, serine 272, glycine 309, tyrosine 348, and arginine 399.

It belongs to the bacterial solute-binding protein 1 family. In terms of assembly, the complex is composed of two ATP-binding proteins (UgpC), two transmembrane proteins (UgpA and UgpE) and a solute-binding protein (UgpB).

Its subcellular location is the periplasm. Functionally, part of the ABC transporter complex UgpBAEC involved in sn-glycerol-3-phosphate (G3P) import. Binds G3P. This chain is sn-glycerol-3-phosphate-binding periplasmic protein UgpB (ugpB), found in Yersinia enterocolitica serotype O:8 / biotype 1B (strain NCTC 13174 / 8081).